The sequence spans 36 residues: Photosystem I reaction center subunit VIII (36 aa).

The chain crosses the membrane as a helical span at residues 6 to 28 (LPSIFVPLVGLMFPAIAMASLSL).

Belongs to the PsaI family.

The protein localises to the plastid. It localises to the chloroplast thylakoid membrane. May help in the organization of the PsaL subunit. This Calycanthus floridus var. glaucus (Eastern sweetshrub) protein is Photosystem I reaction center subunit VIII.